The primary structure comprises 407 residues: Na(+)-translocating NADH-quinone reductase subunit F (407 aa).

A helical transmembrane segment spans residues 3 to 23 (IILGVVMFTLIVLVLSGLILA). Positions 32–126 (GDVVIEINNE…NMKIELPEEI (95 aa)) constitute a 2Fe-2S ferredoxin-type domain. Residues Cys-69, Cys-75, Cys-78, and Cys-110 each contribute to the [2Fe-2S] cluster site. The 141-residue stretch at 129-269 (VKKWECEVIS…SGPFGEFFAK (141 aa)) folds into the FAD-binding FR-type domain.

It belongs to the NqrF family. In terms of assembly, composed of six subunits; NqrA, NqrB, NqrC, NqrD, NqrE and NqrF. [2Fe-2S] cluster serves as cofactor. It depends on FAD as a cofactor.

It is found in the cell inner membrane. The catalysed reaction is a ubiquinone + n Na(+)(in) + NADH + H(+) = a ubiquinol + n Na(+)(out) + NAD(+). Functionally, NQR complex catalyzes the reduction of ubiquinone-1 to ubiquinol by two successive reactions, coupled with the transport of Na(+) ions from the cytoplasm to the periplasm. The first step is catalyzed by NqrF, which accepts electrons from NADH and reduces ubiquinone-1 to ubisemiquinone by a one-electron transfer pathway. This chain is Na(+)-translocating NADH-quinone reductase subunit F, found in Klebsiella pneumoniae subsp. pneumoniae (strain ATCC 700721 / MGH 78578).